Consider the following 281-residue polypeptide: Aldo-keto reductase MAP_3007 (281 aa).

Tyrosine 56 functions as the Proton donor in the catalytic mechanism. NADPH-binding residues include leucine 196, isoleucine 234, arginine 236, serine 237, alanine 238, serine 245, and arginine 272.

The protein belongs to the aldo/keto reductase family.

The sequence is that of Aldo-keto reductase MAP_3007 from Mycolicibacterium paratuberculosis (strain ATCC BAA-968 / K-10) (Mycobacterium paratuberculosis).